We begin with the raw amino-acid sequence, 389 residues long: Type 2 DNA topoisomerase 6 subunit A (389 aa).

The Topo IIA-type catalytic domain maps to 13-161 (KARLRAAEVM…MLILSKEKGK (149 aa)). Catalysis depends on Y107, which acts as the O-(5'-phospho-DNA)-tyrosine intermediate. Mg(2+)-binding residues include E208 and D260.

It belongs to the TOP6A family. As to quaternary structure, homodimer. Heterotetramer of two Top6A and two Top6B chains. Mg(2+) is required as a cofactor.

The enzyme catalyses ATP-dependent breakage, passage and rejoining of double-stranded DNA.. In terms of biological role, relaxes both positive and negative superturns and exhibits a strong decatenase activity. The chain is Type 2 DNA topoisomerase 6 subunit A from Aeropyrum pernix (strain ATCC 700893 / DSM 11879 / JCM 9820 / NBRC 100138 / K1).